We begin with the raw amino-acid sequence, 167 residues long: Phospholipase A and acyltransferase 1 (167 aa).

At 1 to 138 (MAVNDCFSLT…GEGVSEQANR (138 aa)) the chain is on the cytoplasmic side. In terms of domain architecture, LRAT spans 20 to 135 (LIEVFRPCYQ…LRYGEGVSEQ (116 aa)). Residue histidine 30 is part of the active site. The Acyl-thioester intermediate role is filled by cysteine 119. Residues 139 to 159 (AIGTIGLVAAGIDIFTFLGLF) form a helical membrane-spanning segment. Over 160–167 (PKRQRTKY) the chain is Lumenal.

This sequence belongs to the H-rev107 family. Expressed in skeletal muscle, heart, brain, bone marrow and testis. As to expression, abundantly expressed in brain, heart, and skeletal muscle.

The protein localises to the membrane. Its subcellular location is the cytoplasm. It localises to the nucleus. It carries out the reaction a 1,2-diacyl-sn-glycero-3-phosphocholine + H2O = a 1-acyl-sn-glycero-3-phosphocholine + a fatty acid + H(+). It catalyses the reaction a 1,2-diacyl-sn-glycero-3-phosphocholine + H2O = a 2-acyl-sn-glycero-3-phosphocholine + a fatty acid + H(+). The enzyme catalyses 1,2-dihexadecanoyl-sn-glycero-3-phosphocholine + H2O = 2-hexadecanoyl-sn-glycero-3-phosphocholine + hexadecanoate + H(+). The catalysed reaction is 1,2-dihexadecanoyl-sn-glycero-3-phosphocholine + H2O = 1-hexadecanoyl-sn-glycero-3-phosphocholine + hexadecanoate + H(+). It carries out the reaction 1-hexadecanoyl-2-(5Z,8Z,11Z,14Z-eicosatetraenoyl)-sn-glycero-3-phosphoethanolamine + H2O = 2-(5Z,8Z,11Z,14Z)-eicosatetraenoyl-sn-glycero-3-phosphoethanolamine + hexadecanoate + H(+). It catalyses the reaction 1-hexadecanoyl-2-(5Z,8Z,11Z,14Z-eicosatetraenoyl)-sn-glycero-3-phosphoethanolamine + H2O = 1-hexadecanoyl-sn-glycero-3-phosphoethanolamine + (5Z,8Z,11Z,14Z)-eicosatetraenoate + H(+). The enzyme catalyses 1,2-di-(9Z-octadecenoyl)-sn-glycero-3-phosphoethanolamine + 1,2-dihexadecanoyl-sn-glycero-3-phosphocholine = hexadecanoyl-sn-glycero-3-phosphocholine + N-hexadecanoyl-1,2-di-(9Z-octadecenoyl)-sn-glycero-3-phosphoethanolamine + H(+). The catalysed reaction is 1,2-dihexadecanoyl-sn-glycero-3-phosphocholine + a 2-acyl-sn-glycero-3-phosphocholine = a 1-hexadecanoyl-2-acyl-sn-glycero-3-phosphocholine + 2-hexadecanoyl-sn-glycero-3-phosphocholine. In terms of biological role, exhibits both phospholipase A1/2 and acyltransferase activities. Shows phospholipase A1 (PLA1) and A2 (PLA2) activity, catalyzing the calcium-independent release of fatty acids from the sn-1 or sn-2 position of glycerophospholipids. Shows O-acyltransferase activity, catalyzing the transfer of a fatty acyl group from glycerophospholipid to the hydroxyl group of lysophospholipid. Shows N-acyltransferase activity, catalyzing the calcium-independent transfer of a fatty acyl group at the sn-1 position of phosphatidylcholine (PC) and other glycerophospholipids to the primary amine of phosphatidylethanolamine (PE), forming N-acylphosphatidylethanolamine (NAPE), which serves as precursor for N-acylethanolamines (NAEs). This Mus musculus (Mouse) protein is Phospholipase A and acyltransferase 1.